Consider the following 385-residue polypeptide: tRNA (guanine(26)-N(2))-dimethyltransferase (385 aa).

The Trm1 methyltransferase domain maps to 1–379; that stretch reads MNITEGVVEL…ATIAEIRSAT (379 aa). Residues arginine 37, arginine 67, aspartate 82, aspartate 108, and alanine 109 each contribute to the S-adenosyl-L-methionine site. Cysteine 247, cysteine 250, cysteine 267, and cysteine 270 together coordinate Zn(2+).

It belongs to the class I-like SAM-binding methyltransferase superfamily. Trm1 family.

The enzyme catalyses guanosine(26) in tRNA + 2 S-adenosyl-L-methionine = N(2)-dimethylguanosine(26) in tRNA + 2 S-adenosyl-L-homocysteine + 2 H(+). In terms of biological role, dimethylates a single guanine residue at position 26 of a number of tRNAs using S-adenosyl-L-methionine as donor of the methyl groups. The protein is tRNA (guanine(26)-N(2))-dimethyltransferase of Haloquadratum walsbyi (strain DSM 16790 / HBSQ001).